The primary structure comprises 357 residues: Actin, macronuclear (357 aa).

It belongs to the actin family. Met-1 may be removed after translation.

It is found in the cytoplasm. It localises to the cytoskeleton. It carries out the reaction ATP + H2O = ADP + phosphate + H(+). Its function is as follows. Actins are highly conserved proteins that are involved in various types of cell motility and are ubiquitously expressed in all eukaryotic cells. The protein is Actin, macronuclear of Oxytricha fallax.